The chain runs to 269 residues: MSFVIATFYHFVKLSNYYDMKDEIKAACDNFELKGTILLAEEGINATISGERNAINKIFNFLCSDYRLKDLTWKESAAKYQPFSKMKVRLKREIVNLGVSNLDTSLRGKYIDPDHWDDFISQPDVLVIDTRNEYEVKLGKFKNAINPYIQYFREFPQWAKSFSKNKNLKVAMYCTGGIRCEKSTAYMKSLGFNDVYHLKGGILSYLERTHNKNGNWEGECFVFDDRIAINSSLAPSNKIKCIFCSNQVSADELKSVSRGQVVCSDCNPS.

The 94-residue stretch at 121–214 (SQPDVLVIDT…YLERTHNKNG (94 aa)) folds into the Rhodanese domain. The Cysteine persulfide intermediate role is filled by Cys-174.

The protein belongs to the TrhO family.

The catalysed reaction is uridine(34) in tRNA + AH2 + O2 = 5-hydroxyuridine(34) in tRNA + A + H2O. In terms of biological role, catalyzes oxygen-dependent 5-hydroxyuridine (ho5U) modification at position 34 in tRNAs. The protein is tRNA uridine(34) hydroxylase of Wolbachia sp. subsp. Brugia malayi (strain TRS).